A 541-amino-acid chain; its full sequence is Zingiberene synthase (541 aa).

Residues Asp-295, Asp-299, Asn-439, Ser-443, and Glu-447 each coordinate Mg(2+). The DDXXD motif signature appears at 295-299 (DDIID).

This sequence belongs to the terpene synthase family. Mg(2+) is required as a cofactor. Mn(2+) serves as cofactor.

The protein localises to the cytoplasm. The enzyme catalyses (2E,6E)-farnesyl diphosphate = alpha-zingiberene + diphosphate. The protein operates within secondary metabolite biosynthesis; terpenoid biosynthesis. Its function is as follows. Sesquiterpene synthase converting farnesyl diphosphate into two major products, zingiberene &gt; beta-sesquiphellandrene, and five minor products, 7-epi-sesquithujene, sesquisabinene A, (E)-alpha-bergamotene, (E)-beta-farnesene and beta-bisabolene. Can also accept geranyl diphosphate as substrate, producing nine monoterpenes, with myrcene, limonene and alpha-terpinolene as the major products. The protein is Zingiberene synthase (TPS1) of Sorghum bicolor (Sorghum).